Consider the following 314-residue polypeptide: MRARPLTLLTALAAVTLVVVAGCEARVEAEAYSAADRISSRPQARPQPQPVELLLRAITPPRAPAASPNVGFGELPTRVRQATDEAAAMGATLSVAVLDRATGQLVSNGNTQIIATASVAKLFIADDLLLAEAEGKVTLSPEDHHALDVMLQSSDDGAAERFWSQDGGNAVVTQVARRYGLRSTAPPSDGRWWNTISSAPDLIRYYDMLLDGSGGLPLDRAAVIIADLAQSTPTGIDGYPQRFGIPDGLYAEPVAVKQGWMCCIGSSWMHLSTGVIGPERRYIMVIESLQPADDATARATITQAVRTMFPNGRI.

An N-terminal signal peptide occupies residues 1–22 (MRARPLTLLTALAAVTLVVVAG). The N-palmitoyl cysteine moiety is linked to residue cysteine 23. Cysteine 23 is lipidated: S-diacylglycerol cysteine.

It is found in the cell membrane. This chain is Putative lipoprotein LppW (lppW), found in Mycobacterium bovis (strain ATCC BAA-935 / AF2122/97).